The primary structure comprises 140 residues: uncharacterized protein (140 aa).

Residues 2–140 (KAVIAKNEEQ…GIPHLQMMKD (139 aa)) form the N-acetyltransferase domain.

The protein belongs to the acetyltransferase family.

This is an uncharacterized protein from Bacillus subtilis (strain 168).